Here is a 229-residue protein sequence, read N- to C-terminus: Potassium/proton antiporter CemA (229 aa).

3 helical membrane-spanning segments follow: residues 6–26 (AFIP…ISLC), 107–127 (ILHF…SFWA), and 189–209 (ILSG…KYWI).

This sequence belongs to the CemA family.

The protein localises to the plastid. The protein resides in the chloroplast inner membrane. It carries out the reaction K(+)(in) + H(+)(out) = K(+)(out) + H(+)(in). Functionally, contributes to K(+)/H(+) antiport activity by supporting proton efflux to control proton extrusion and homeostasis in chloroplasts in a light-dependent manner to modulate photosynthesis. Prevents excessive induction of non-photochemical quenching (NPQ) under continuous-light conditions. Indirectly promotes efficient inorganic carbon uptake into chloroplasts. The chain is Potassium/proton antiporter CemA from Crucihimalaya wallichii (Rock-cress).